The sequence spans 382 residues: Succinate--CoA ligase [ADP-forming] subunit beta (382 aa).

Positions 9–240 (KELFAKYGVK…PRDITEFEAY (232 aa)) constitute an ATP-grasp domain. Residues Lys-45, 52–54 (GRG), Leu-94, and Glu-99 contribute to the ATP site. The Mg(2+) site is built by Asn-193 and Asp-207. Residues Asn-260 and 317-319 (GIT) contribute to the substrate site.

The protein belongs to the succinate/malate CoA ligase beta subunit family. As to quaternary structure, heterotetramer of two alpha and two beta subunits. It depends on Mg(2+) as a cofactor.

It carries out the reaction succinate + ATP + CoA = succinyl-CoA + ADP + phosphate. It catalyses the reaction GTP + succinate + CoA = succinyl-CoA + GDP + phosphate. It functions in the pathway carbohydrate metabolism; tricarboxylic acid cycle; succinate from succinyl-CoA (ligase route): step 1/1. In terms of biological role, succinyl-CoA synthetase functions in the citric acid cycle (TCA), coupling the hydrolysis of succinyl-CoA to the synthesis of either ATP or GTP and thus represents the only step of substrate-level phosphorylation in the TCA. The beta subunit provides nucleotide specificity of the enzyme and binds the substrate succinate, while the binding sites for coenzyme A and phosphate are found in the alpha subunit. This is Succinate--CoA ligase [ADP-forming] subunit beta from Pyrobaculum calidifontis (strain DSM 21063 / JCM 11548 / VA1).